The sequence spans 942 residues: Inter alpha-trypsin inhibitor, heavy chain 4 (942 aa).

An N-terminal signal peptide occupies residues methionine 1–alanine 28. A VIT domain is found at glutamate 29 to glutamate 148. A glycan (N-linked (GlcNAc...) asparagine) is linked at asparagine 81. A VWFA domain is found at asparagine 274–valine 457. N-linked (GlcNAc...) asparagine glycans are attached at residues asparagine 517 and asparagine 577. Residues threonine 552 to threonine 586 adopt a coiled-coil conformation. 2 disordered regions span residues arginine 658–serine 698 and glutamate 726–valine 745. Residues proline 663 to proline 690 are compositionally biased toward pro residues. An O-linked (GalNAc...) threonine glycan is attached at threonine 732. A disulfide bridge links cysteine 761 with cysteine 937. A glycan (N-linked (GlcNAc...) asparagine) is linked at asparagine 874.

The protein belongs to the ITIH family. In terms of assembly, interacts (via C-terminus) with DNAJC1 (via SANT 2 domain). May be O-glycosylated. N-glycosylated. In terms of tissue distribution, highly expressed in liver. Weak expression in lung and heart.

It is found in the secreted. Type II acute-phase protein (APP) involved in inflammatory responses to trauma. May also play a role in liver development or regeneration. This chain is Inter alpha-trypsin inhibitor, heavy chain 4 (Itih4), found in Mus musculus (Mouse).